A 256-amino-acid polypeptide reads, in one-letter code: Signal peptidase I (256 aa).

Catalysis depends on residues Ser-32 and Lys-75.

Belongs to the peptidase S26 family.

The enzyme catalyses Cleavage of hydrophobic, N-terminal signal or leader sequences from secreted and periplasmic proteins.. The sequence is that of Signal peptidase I (lepB) from Aquifex aeolicus (strain VF5).